The chain runs to 230 residues: Sugar fermentation stimulation protein homolog (230 aa).

It belongs to the SfsA family.

This Ruegeria pomeroyi (strain ATCC 700808 / DSM 15171 / DSS-3) (Silicibacter pomeroyi) protein is Sugar fermentation stimulation protein homolog.